Here is a 206-residue protein sequence, read N- to C-terminus: Small ribosomal subunit protein uS4 (206 aa).

The segment at 28-48 (YMERRPYGPGEHGRARKKQDS) is disordered. The 66-residue stretch at 95–160 (MRLDALVLRA…MPPFQVAAAG (66 aa)) folds into the S4 RNA-binding domain.

It belongs to the universal ribosomal protein uS4 family. As to quaternary structure, part of the 30S ribosomal subunit. Contacts protein S5. The interaction surface between S4 and S5 is involved in control of translational fidelity.

One of the primary rRNA binding proteins, it binds directly to 16S rRNA where it nucleates assembly of the body of the 30S subunit. Its function is as follows. With S5 and S12 plays an important role in translational accuracy. The polypeptide is Small ribosomal subunit protein uS4 (Paenarthrobacter aurescens (strain TC1)).